Reading from the N-terminus, the 118-residue chain is Cell division topological specificity factor (118 aa).

Residues 86–118 form a disordered region; sequence RSQAKAVSSQENGASSQEAVSSQESVSTPGAME. Over residues 99 to 112 the composition is skewed to low complexity; the sequence is ASSQEAVSSQESVS.

It belongs to the MinE family.

Prevents the cell division inhibition by proteins MinC and MinD at internal division sites while permitting inhibition at polar sites. This ensures cell division at the proper site by restricting the formation of a division septum at the midpoint of the long axis of the cell. The sequence is that of Cell division topological specificity factor from Prochlorococcus marinus (strain MIT 9313).